We begin with the raw amino-acid sequence, 490 residues long: GTPase Der (490 aa).

EngA-type G domains are found at residues 3-166 (PVVA…AEAM) and 200-373 (IKLA…DSAT). GTP contacts are provided by residues 9-16 (GRPNVGKS), 56-60 (DTGGI), 118-121 (NKVD), 206-213 (GKPNVGKS), 253-257 (DTAGV), and 318-321 (NKWD). The KH-like domain maps to 374 to 458 (RRVSTSMLTR…PIQIRFQDGG (85 aa)).

Belongs to the TRAFAC class TrmE-Era-EngA-EngB-Septin-like GTPase superfamily. EngA (Der) GTPase family. As to quaternary structure, associates with the 50S ribosomal subunit.

In terms of biological role, GTPase that plays an essential role in the late steps of ribosome biogenesis. In Shewanella piezotolerans (strain WP3 / JCM 13877), this protein is GTPase Der.